Here is a 182-residue protein sequence, read N- to C-terminus: Capsid protein (182 aa).

The segment at 136-182 (NAPILSTLPETTVVRRRRPSGRRTPSPRRRRSQSPRRRRSQSPASSC) is disordered. Positions 149 to 175 (VRRRRPSGRRTPSPRRRRSQSPRRRRS) are enriched in basic residues. Positions 157-174 (RRTPSPRRRRSQSPRRRR) match the Bipartite nuclear localization signal motif. Phosphoserine; by host occurs at positions 161 and 169. Repeat copies occupy residues 161-168 (SPRRRRSQ) and 169-176 (SPRRRRSQ). Residues 161 to 176 (SPRRRRSQSPRRRRSQ) are 2 X 8 AA repeats of S-P-R-R-R-[PR]-S-Q. The tract at residues 176–182 (QSPASSC) is RNA binding.

It belongs to the orthohepadnavirus core antigen family. Homodimerizes, then multimerizes. Interacts with cytosol exposed regions of viral L glycoprotein present in the reticulum-to-Golgi compartment. Interacts with human FLNB. Phosphorylated form interacts with host importin alpha; this interaction depends on the exposure of the NLS, which itself depends upon genome maturation and/or phosphorylation of the capsid protein. Interacts with host NUP153. Post-translationally, phosphorylated by host SRPK1, SRPK2, and maybe protein kinase C or GAPDH. Phosphorylation is critical for pregenomic RNA packaging. Protein kinase C phosphorylation is stimulated by HBx protein and may play a role in transport of the viral genome to the nucleus at the late step during the viral replication cycle.

It is found in the virion. The protein localises to the host cytoplasm. In terms of biological role, self assembles to form an icosahedral capsid. Most capsids appear to be large particles with an icosahedral symmetry of T=4 and consist of 240 copies of capsid protein, though a fraction forms smaller T=3 particles consisting of 180 capsid proteins. Entering capsids are transported along microtubules to the nucleus. Phosphorylation of the capsid is thought to induce exposure of nuclear localization signal in the C-terminal portion of the capsid protein that allows binding to the nuclear pore complex via the importin (karyopherin-) alpha and beta. Capsids are imported in intact form through the nuclear pore into the nuclear basket, where it probably binds NUP153. Only capsids that contain the mature viral genome can release the viral DNA and capsid protein into the nucleoplasm. Immature capsids get stuck in the basket. Capsids encapsulate the pre-genomic RNA and the P protein. Pre-genomic RNA is reverse-transcribed into DNA while the capsid is still in the cytoplasm. The capsid can then either be directed to the nucleus, providing more genomes for transcription, or bud through the endoplasmic reticulum to provide new virions. The sequence is that of Capsid protein from Woolly monkey hepatitis B virus (isolate Louisville) (WMHBV).